The chain runs to 119 residues: Large ribosomal subunit protein uL22c (119 aa).

Belongs to the universal ribosomal protein uL22 family. In terms of assembly, part of the 50S ribosomal subunit.

Its subcellular location is the plastid. It localises to the chloroplast. Functionally, this protein binds specifically to 23S rRNA. The globular domain of the protein is located near the polypeptide exit tunnel on the outside of the subunit, while an extended beta-hairpin is found that lines the wall of the exit tunnel in the center of the 70S ribosome. The chain is Large ribosomal subunit protein uL22c (rpl22) from Mesostigma viride (Green alga).